Here is a 67-residue protein sequence, read N- to C-terminus: MQNDWQEFKEFFIYIFLFIDKANVESIIMWNLTQNEYLTLMVGVWVVILFLTWFFLWMVFKIVGYFK.

2 helical membrane-spanning segments follow: residues 10-30 and 40-60; these read EFFI…IIMW and LMVG…WMVF.

It belongs to the plectrovirus ORF10 family.

It is found in the host membrane. This is an uncharacterized protein from Spiroplasma melliferum (SpV1).